The sequence spans 318 residues: Basic leucine zipper (bZIP) transcription factor atfB (318 aa).

The disordered stretch occupies residues 114 to 157 (FNSSPPEYAPPKHRSSLSEQSQTDGYGVSTRRRKASAIDQCEQQ). A basic motif region spans residues 160–199 (REKREKFLERNRLAASKCRQKKKEHTKLLETRFREVSNKK). The bZIP domain maps to 160 to 223 (REKREKFLER…LNLKNEMLRH (64 aa)). Residues 202–216 (LESEIEHLRSEVLNL) are leucine-zipper. Positions 275–301 (DGPMQLPSEMGSPLDQRRDSEQSIMTE) are disordered.

The protein belongs to the bZIP family. ATF subfamily.

The protein localises to the nucleus. Its function is as follows. Transcription factor that acts as a key player in the regulatory circuit that integrates secondary metabolism and cellular response to oxidative stress. Regulates the genes involved in development and stress response through direct binding to their promoters. Particularly involved in the resistance to oxidative stress in asexual conidiospores. The protein is Basic leucine zipper (bZIP) transcription factor atfB of Aspergillus oryzae (strain ATCC 42149 / RIB 40) (Yellow koji mold).